The sequence spans 496 residues: Lysine--tRNA ligase (496 aa).

Mg(2+)-binding residues include E408 and E415.

Belongs to the class-II aminoacyl-tRNA synthetase family. As to quaternary structure, homodimer. Mg(2+) serves as cofactor.

It is found in the cytoplasm. It catalyses the reaction tRNA(Lys) + L-lysine + ATP = L-lysyl-tRNA(Lys) + AMP + diphosphate. In Legionella pneumophila (strain Paris), this protein is Lysine--tRNA ligase.